The primary structure comprises 364 residues: 3-isopropylmalate dehydrogenase (364 aa).

Residue 78–89 (GPKWGTGAVRPE) participates in NAD(+) binding. Substrate-binding residues include arginine 96, arginine 106, arginine 135, and aspartate 224. Mg(2+) contacts are provided by aspartate 224, aspartate 249, and aspartate 253. 288–299 (GSAPDLPANKVN) provides a ligand contact to NAD(+).

This sequence belongs to the isocitrate and isopropylmalate dehydrogenases family. As to quaternary structure, homodimer. The cofactor is Mg(2+). Mn(2+) is required as a cofactor.

The protein localises to the cytoplasm. The catalysed reaction is (2R,3S)-3-isopropylmalate + NAD(+) = 4-methyl-2-oxopentanoate + CO2 + NADH. It functions in the pathway amino-acid biosynthesis; L-leucine biosynthesis; L-leucine from 3-methyl-2-oxobutanoate: step 3/4. Functionally, catalyzes the oxidation of 3-carboxy-2-hydroxy-4-methylpentanoate (3-isopropylmalate) to 3-carboxy-4-methyl-2-oxopentanoate. The product decarboxylates to 4-methyl-2 oxopentanoate. The chain is 3-isopropylmalate dehydrogenase (LEU2) from Wickerhamomyces anomalus (strain ATCC 8168 / CBS 5759 / DSM 6766 / JCM 3585 / IAM 12210 / NCYC 432 / NBRC 10213 / NRRL Y-366 / AJ 5027) (Yeast).